The sequence spans 299 residues: Fluorinase (299 aa).

Residues D16, 21–23 (DDS), Y77, S158, D210, N215, 269–270 (SR), and 277–279 (RNA) each bind S-adenosyl-L-methionine.

In terms of assembly, homohexamer; dimers of trimer.

The catalysed reaction is fluoride + S-adenosyl-L-methionine = 5'-deoxy-5'-fluoroadenosine + L-methionine. With respect to regulation, competitively inhibited by S-adenosyl-L-homocysteine (AdoHcy) and S-adenosyl-L-homocysteine (SAH). Sinefungin is only weakly inhibitory. Involved in the biosynthesis of fluorometabolites. Catalyzes the formation of a C-F bond by combining S-adenosyl-L-methionine (SAM) and fluoride to generate 5'-fluoro-5'-deoxyadenosine (5'-FDA) and L-methionine. It can also use 2'-deoxyadenosine in place of adenosine as substrate. The protein is Fluorinase of Streptantibioticus cattleyicolor (Streptomyces cattleya).